We begin with the raw amino-acid sequence, 172 residues long: Odorant-binding protein (172 aa).

The N-terminal stretch at 1–15 (MVKFLLIVLALGVSC) is a signal peptide. Disulfide bonds link C60-C64 and C79-C170.

It belongs to the calycin superfamily. Lipocalin family. Homodimer.

It localises to the secreted. In terms of biological role, this protein is found in nasal epithelium and it binds a wide variety of chemical odorants. The polypeptide is Odorant-binding protein (Obp1f) (Rattus norvegicus (Rat)).